We begin with the raw amino-acid sequence, 295 residues long: Proline-rich proteoglycan 2 (295 aa).

A signal peptide spans methionine 1 to alanine 16. Positions alanine 16–alanine 295 are disordered. Positions glutamate 26–histidine 41 are enriched in low complexity. The span at proline 48–proline 58 shows a compositional bias: pro residues. Positions glutamate 62 to glycine 78 are enriched in acidic residues. 2 stretches are compositionally biased toward pro residues: residues proline 100 to glycine 187 and glutamine 194 to proline 278.

In terms of processing, contains glycosaminoglycans of chondroitin-sulfate and heparan types.

It is found in the secreted. This is Proline-rich proteoglycan 2 (Prpg2) from Rattus norvegicus (Rat).